The following is a 725-amino-acid chain: Manganese-exporting P-type ATPase (725 aa).

The region spanning 25-92 (GRMRIQIEWV…AISGAAHVAA (68 aa)) is the HMA domain. A run of 6 helical transmembrane segments spans residues 101–119 (HSSD…GAAA), 142–160 (LVAS…RGAL), 165–179 (TGTD…IASL), 188–202 (LAVL…YLQD), 335–359 (VGEN…AITK), and 365–383 (MTVL…TPTA). Catalysis depends on D416, which acts as the 4-aspartylphosphate intermediate. Mg(2+) is bound by residues D416, T418, and D618. Transmembrane regions (helical) follow at residues 669–688 (AVEV…AAGL) and 698–717 (PVLA…ANSS).

This sequence belongs to the cation transport ATPase (P-type) (TC 3.A.3) family. Type IB subfamily.

It is found in the cell membrane. It carries out the reaction Mn(2+)(in) + ATP + H2O = Mn(2+)(out) + ADP + phosphate + H(+). Its function is as follows. High affinity, slow turnover Mn(2+) transporting ATPase. The sequence is that of Manganese-exporting P-type ATPase (ctpC) from Mycobacterium leprae (strain TN).